The primary structure comprises 357 residues: Protein RecA (357 aa).

Gly-67–Thr-74 lines the ATP pocket. Residues Pro-332–Phe-357 are disordered.

Belongs to the RecA family.

It localises to the cytoplasm. Functionally, can catalyze the hydrolysis of ATP in the presence of single-stranded DNA, the ATP-dependent uptake of single-stranded DNA by duplex DNA, and the ATP-dependent hybridization of homologous single-stranded DNAs. It interacts with LexA causing its activation and leading to its autocatalytic cleavage. In Shewanella sp. (strain ANA-3), this protein is Protein RecA.